A 662-amino-acid chain; its full sequence is MTTLTSGSPTPMGAHFDGVGINFTLFSAHAEQVELCLFDDNNQELRIPLPARSGDIWHGYLPGGKPGQRYGYRVSGPFNPQQGHRFNPHKLLIDPYARALDRKVGDDPSLQGGVSQPDYRDSAAVAPKCIVVHEEYDWQGDRRPTIPWGNTVIYEAHVRGLTQLHPDIPADLRGTYAGLAHPAMIQYLQKLGITTLELLPVQFHIDEPRLQKMGLSNYWGYNVLAPYAVDPDYASGREGISPLRELRDAVKALHQAGIEVILDVVFNHSAELDVFGPTLCQRGIDNASYYWLTSEGEYDNMTGCGNTLRLSQPYVMQWVLDCLRYWVDSCHIDGFRFDLGTVLGRSPAFDQHAPLFAALAADKQLCNCKMIAEPWDIGLGGYQLGNFPTGFSEWNDQYRDAMRRFWLRGDLPLGQFAQHFAASSNLFKHRERLPSASINQITAHDGFTLQDLLCFNQKHNQINGEENRDGSDNNLSNNFGSEGLVADDAIWQRRKACQRALLTTLLLSQGTPMLLAGDEHGHSQQGNNNAYCQNNILTWLDWGSADRELTAFTAELIRLRQQIPALIQDSWWEDGDGNVQWLDSQGEALSDGAWEQGCQKQLQIRLSQRWLVVINATDQACEMHLPVGEWVVIPPFEPSEHTEPLTVWNGSAHTVCVLTQKF.

D338 functions as the Nucleophile in the catalytic mechanism. The Proton donor role is filled by E373.

Belongs to the glycosyl hydrolase 13 family.

It carries out the reaction Hydrolysis of (1-&gt;6)-alpha-D-glucosidic linkages to branches with degrees of polymerization of three or four glucose residues in limit dextrin.. It participates in glycan degradation; glycogen degradation. Its function is as follows. Removes maltotriose and maltotetraose chains that are attached by 1,6-alpha-linkage to the limit dextrin main chain, generating a debranched limit dextrin. This Yersinia enterocolitica serotype O:8 / biotype 1B (strain NCTC 13174 / 8081) protein is Glycogen debranching enzyme.